A 343-amino-acid polypeptide reads, in one-letter code: Methionine import ATP-binding protein MetN 3 (343 aa).

Residues 2-241 enclose the ABC transporter domain; that stretch reads IELSNITKVF…PKTPLAQKFI (240 aa). 38–45 contacts ATP; it reads GASGAGKS.

This sequence belongs to the ABC transporter superfamily. Methionine importer (TC 3.A.1.24) family. In terms of assembly, the complex is composed of two ATP-binding proteins (MetN), two transmembrane proteins (MetI) and a solute-binding protein (MetQ).

The protein localises to the cell inner membrane. The catalysed reaction is L-methionine(out) + ATP + H2O = L-methionine(in) + ADP + phosphate + H(+). It catalyses the reaction D-methionine(out) + ATP + H2O = D-methionine(in) + ADP + phosphate + H(+). Part of the ABC transporter complex MetNIQ involved in methionine import. Responsible for energy coupling to the transport system. This Pectobacterium atrosepticum (strain SCRI 1043 / ATCC BAA-672) (Erwinia carotovora subsp. atroseptica) protein is Methionine import ATP-binding protein MetN 3.